The chain runs to 365 residues: Probable UDP-arabinopyranose mutase 1 (365 aa).

Positions 100–102 match the DXD motif motif; that stretch reads DDD. N-linked (Glc...) arginine glycosylation is present at R148.

This sequence belongs to the RGP family. In terms of assembly, homopentamer or homohexamer. Mn(2+) is required as a cofactor. The cofactor is Mg(2+). Reversibly glycosylated by UDP-glucose, UDP-xylose and UDP-galactose, but not UDP-mannose. As to expression, expressed in all tissues tested, including root, tuber, leaf, petiole, shoot, stolon and stem.

It is found in the secreted. The protein resides in the cell wall. It localises to the cell junction. The protein localises to the plasmodesma. Its subcellular location is the golgi apparatus. It catalyses the reaction UDP-beta-L-arabinofuranose = UDP-beta-L-arabinopyranose. Probable UDP-L-arabinose mutase involved in the biosynthesis of cell wall non-cellulosic polysaccharides. Was initially shown to possess an autoglycosylating activity which is dependent on the presence of UDP-glucose and manganese. The polypeptide is Probable UDP-arabinopyranose mutase 1 (Solanum tuberosum (Potato)).